Reading from the N-terminus, the 452-residue chain is Prenyltransferase fsdK (452 aa).

This sequence belongs to the tryptophan dimethylallyltransferase family.

It participates in mycotoxin biosynthesis. Its function is as follows. Prenyltransferase; part of the gene cluster that mediates the biosynthesis of fusaridione A, a bright yellow trans-fused decalin-containing tetramic acid with antimicrobial activity. The PKS module of fsdS catalyzes the formation of the polyketide unit which is then conjugated to L-tyrosine by the condensation domain of the fsdS NRPS module. Activity of the Dieckmann cyclase domain (RED) results in release of the intermediate fusaridione A. The unstable pyrrolidinedione ring of fusaridione A is opened through a reverse-Dieckmann reaction to afford its ring-opened form. The polypeptide is Prenyltransferase fsdK (Fusarium heterosporum).